We begin with the raw amino-acid sequence, 74 residues long: Conotoxin VnMEKL-0221 (74 aa).

Residues 1 to 19 (MEKLTILLLVAAVLMWTQA) form the signal peptide. The propeptide occupies 20 to 46 (LIQEKRPKEKIKFLSKRKTTAESWWEG). Disulfide bonds link cysteine 48–cysteine 62, cysteine 55–cysteine 66, and cysteine 61–cysteine 71.

It belongs to the conotoxin O2 superfamily. Expressed by the venom duct.

It is found in the secreted. This Conus ventricosus (Mediterranean cone) protein is Conotoxin VnMEKL-0221.